The chain runs to 300 residues: Acetaldehyde dehydrogenase (300 aa).

Residue 11 to 14 participates in NAD(+) binding; that stretch reads SGNI. The active-site Acyl-thioester intermediate is C129. Residues 160-168 and N271 each bind NAD(+); that span reads SVGPGTRQN.

The protein belongs to the acetaldehyde dehydrogenase family.

The enzyme catalyses acetaldehyde + NAD(+) + CoA = acetyl-CoA + NADH + H(+). The chain is Acetaldehyde dehydrogenase (mhpF) from Pseudoalteromonas translucida (strain TAC 125).